The following is a 345-amino-acid chain: L-Ala-D/L-Glu epimerase (345 aa).

Residues T134 and K159 each coordinate substrate. K161 (proton acceptor; specific for (R)-substrate epimerization) is an active-site residue. Mg(2+) is bound at residue D188. N190 provides a ligand contact to substrate. E216 and D241 together coordinate Mg(2+). The Proton acceptor; specific for (S)-substrate epimerization role is filled by K265. Positions 292, 317, and 319 each coordinate substrate.

The protein belongs to the mandelate racemase/muconate lactonizing enzyme family. Mg(2+) serves as cofactor.

The catalysed reaction is L-alanyl-L-glutamate = L-alanyl-D-glutamate. It participates in cell wall degradation; peptidoglycan degradation. Its function is as follows. Catalyzes the epimerization of L-Ala-D-Glu to L-Ala-L-Glu and has probably a role in the metabolism of the murein peptide, of which L-Ala-D-Glu is a component. Is also able to catalyze the reverse reaction and the epimerization of a broad range of other dipeptides; is most efficient with L-Ala-D/L-Phe, L-Ala-D/L-Tyr, and L-Ala-D/L-His. In Thermotoga maritima (strain ATCC 43589 / DSM 3109 / JCM 10099 / NBRC 100826 / MSB8), this protein is L-Ala-D/L-Glu epimerase.